The following is a 1165-amino-acid chain: Peroxisomal ATPase PEX6 (1165 aa).

This sequence belongs to the AAA ATPase family. Interacts with PEX1; forming the PEX1-PEX6 AAA ATPase complex, which is composed of a heterohexamer formed by a trimer of PEX1-PEX6 dimers.

It localises to the membrane. The enzyme catalyses ATP + H2O = ADP + phosphate + H(+). Functionally, component of the PEX1-PEX6 AAA ATPase complex involved in peroxisome biosynthesis. The complex acts as a protein dislocase complex that mediates the ATP-dependent extraction of the PEX5 receptor from peroxisomal membranes, an essential step for PEX5 recycling. Specifically recognizes PEX5 monoubiquitinated at 'Cys-6', and pulls it out of the peroxisome lumen through the PEX2-PEX10-PEX12 retrotranslocation channel. Extraction by the PEX1-PEX6 AAA ATPase complex is accompanied by unfolding of the TPR repeats and release of bound cargo from PEX5. The protein is Peroxisomal ATPase PEX6 of Komagataella pastoris (Yeast).